The chain runs to 156 residues: Large ribosomal subunit protein uL11 (156 aa).

A disordered region spans residues 1-20; it reads MAQSVKTMVEGGKATTGPPI.

It belongs to the universal ribosomal protein uL11 family. In terms of assembly, part of the ribosomal stalk of the 50S ribosomal subunit. Interacts with L10 and the large rRNA to form the base of the stalk. L10 forms an elongated spine to which L12 dimers bind in a sequential fashion forming a multimeric L10(L12)X complex.

Functionally, forms part of the ribosomal stalk which helps the ribosome interact with GTP-bound translation factors. This chain is Large ribosomal subunit protein uL11, found in Thermoplasma acidophilum (strain ATCC 25905 / DSM 1728 / JCM 9062 / NBRC 15155 / AMRC-C165).